A 371-amino-acid chain; its full sequence is Glutamate 5-kinase (371 aa).

Lysine 14 contributes to the ATP binding site. 3 residues coordinate substrate: serine 54, aspartate 141, and asparagine 153. 173–174 (TD) provides a ligand contact to ATP. Residues 280 to 357 (AGDLILDDGA…TQIEKLLGYI (78 aa)) form the PUA domain.

The protein belongs to the glutamate 5-kinase family.

The protein localises to the cytoplasm. It carries out the reaction L-glutamate + ATP = L-glutamyl 5-phosphate + ADP. It participates in amino-acid biosynthesis; L-proline biosynthesis; L-glutamate 5-semialdehyde from L-glutamate: step 1/2. Catalyzes the transfer of a phosphate group to glutamate to form L-glutamate 5-phosphate. This is Glutamate 5-kinase from Aromatoleum aromaticum (strain DSM 19018 / LMG 30748 / EbN1) (Azoarcus sp. (strain EbN1)).